The sequence spans 338 residues: Uroporphyrinogen decarboxylase (338 aa).

Residues 27-31 (RQAGR), Asp-77, Tyr-151, Ser-203, and His-317 contribute to the substrate site.

The protein belongs to the uroporphyrinogen decarboxylase family. In terms of assembly, homodimer.

The protein resides in the cytoplasm. It catalyses the reaction uroporphyrinogen III + 4 H(+) = coproporphyrinogen III + 4 CO2. The protein operates within porphyrin-containing compound metabolism; protoporphyrin-IX biosynthesis; coproporphyrinogen-III from 5-aminolevulinate: step 4/4. Functionally, catalyzes the decarboxylation of four acetate groups of uroporphyrinogen-III to yield coproporphyrinogen-III. The sequence is that of Uroporphyrinogen decarboxylase from Wolbachia pipientis wMel.